Consider the following 120-residue polypeptide: LOB domain-containing protein 8 (120 aa).

The LOB domain occupies 8 to 109; sequence RPCCVCITKN…AYLHELEEKI (102 aa).

The protein belongs to the LOB domain-containing protein family.

The polypeptide is LOB domain-containing protein 8 (LBD8) (Arabidopsis thaliana (Mouse-ear cress)).